Reading from the N-terminus, the 185-residue chain is Ribosome-recycling factor (185 aa).

Positions 132-152 (RRDANEQLKKMEKDSELTEDD) are disordered.

Belongs to the RRF family.

Its subcellular location is the cytoplasm. Its function is as follows. Responsible for the release of ribosomes from messenger RNA at the termination of protein biosynthesis. May increase the efficiency of translation by recycling ribosomes from one round of translation to another. In Alkaliphilus metalliredigens (strain QYMF), this protein is Ribosome-recycling factor.